Reading from the N-terminus, the 325-residue chain is uncharacterized protein (325 aa).

The N-terminal stretch at 1-26 (MQGRVAGSCAPLGLLLVCLHLPGLFA) is a signal peptide. Residues 41 to 60 (GTNLPQLGQPSSTGPSNSEH) are compositionally biased toward polar residues. Disordered regions lie at residues 41 to 110 (GTNL…MDSW) and 147 to 189 (GSGP…AGGK). A compositionally biased stretch (low complexity) spans 147–157 (GSGPLPGESSP).

As to quaternary structure, binds to numerous extracellular matrix proteins. Expressed in skin and tonsils.

It localises to the secreted. It is found in the extracellular space. Its subcellular location is the extracellular matrix. This is an uncharacterized protein from Homo sapiens (Human).